Reading from the N-terminus, the 211-residue chain is 7-carboxy-7-deazaguanine synthase (211 aa).

Substrate contacts are provided by residues 22-24 (LQG) and Arg37. In terms of domain architecture, Radical SAM core spans 28 to 211 (NTGMPSVFVR…LQTHKLIGIE (184 aa)). 3 residues coordinate [4Fe-4S] cluster: Cys41, Cys45, and Cys48. Thr50 serves as a coordination point for Mg(2+). Thr78 contacts substrate. Residues Gly80 and 122-124 (SPK) contribute to the S-adenosyl-L-methionine site.

It belongs to the radical SAM superfamily. 7-carboxy-7-deazaguanine synthase family. Homodimer. [4Fe-4S] cluster is required as a cofactor. Requires S-adenosyl-L-methionine as cofactor. Mg(2+) serves as cofactor.

The catalysed reaction is 6-carboxy-5,6,7,8-tetrahydropterin + H(+) = 7-carboxy-7-deazaguanine + NH4(+). Its pathway is purine metabolism; 7-cyano-7-deazaguanine biosynthesis. Functionally, catalyzes the complex heterocyclic radical-mediated conversion of 6-carboxy-5,6,7,8-tetrahydropterin (CPH4) to 7-carboxy-7-deazaguanine (CDG), a step common to the biosynthetic pathways of all 7-deazapurine-containing compounds. This is 7-carboxy-7-deazaguanine synthase from Haemophilus influenzae (strain ATCC 51907 / DSM 11121 / KW20 / Rd).